The primary structure comprises 247 residues: Ubiquinone biosynthesis O-methyltransferase (247 aa).

Positions 39, 70, 91, and 134 each coordinate S-adenosyl-L-methionine.

It belongs to the methyltransferase superfamily. UbiG/COQ3 family.

The enzyme catalyses a 3-demethylubiquinol + S-adenosyl-L-methionine = a ubiquinol + S-adenosyl-L-homocysteine + H(+). It carries out the reaction a 3-(all-trans-polyprenyl)benzene-1,2-diol + S-adenosyl-L-methionine = a 2-methoxy-6-(all-trans-polyprenyl)phenol + S-adenosyl-L-homocysteine + H(+). Its pathway is cofactor biosynthesis; ubiquinone biosynthesis. In terms of biological role, O-methyltransferase that catalyzes the 2 O-methylation steps in the ubiquinone biosynthetic pathway. This Cereibacter sphaeroides (strain ATCC 17029 / ATH 2.4.9) (Rhodobacter sphaeroides) protein is Ubiquinone biosynthesis O-methyltransferase.